The sequence spans 161 residues: Endoribonuclease YbeY (161 aa).

Zn(2+)-binding residues include His120, His124, and His130.

It belongs to the endoribonuclease YbeY family. Requires Zn(2+) as cofactor.

The protein resides in the cytoplasm. Single strand-specific metallo-endoribonuclease involved in late-stage 70S ribosome quality control and in maturation of the 3' terminus of the 16S rRNA. This is Endoribonuclease YbeY from Erythrobacter litoralis (strain HTCC2594).